The sequence spans 109 residues: Nucleoid-associated protein Spea_1509 (109 aa).

A disordered region spans residues 87 to 109 (NQKEKMAEVTGGMQLPPGMKMPF).

The protein belongs to the YbaB/EbfC family. As to quaternary structure, homodimer.

It is found in the cytoplasm. Its subcellular location is the nucleoid. In terms of biological role, binds to DNA and alters its conformation. May be involved in regulation of gene expression, nucleoid organization and DNA protection. The chain is Nucleoid-associated protein Spea_1509 from Shewanella pealeana (strain ATCC 700345 / ANG-SQ1).